A 461-amino-acid chain; its full sequence is Piperine synthase (461 aa).

Active-site proton acceptor residues include His-168 and Asp-387. Positions 459–461 (SRM) match the Microbody targeting signal motif.

Belongs to the plant acyltransferase family. In terms of assembly, monomer. Confined to immature fruits perisperm. Also detectable in roots.

Its subcellular location is the cytoplasm. It carries out the reaction piperidine + (E,E)-piperoyl-CoA = piperine + CoA + H(+). The catalysed reaction is pyrrolidine + (E,E)-piperoyl-CoA = piperyline + CoA + H(+). The enzyme catalyses (E,E)-piperoyl-CoA + 2-methylpropan-1-amine = (E,E)-piperlonguminine + CoA + H(+). Its pathway is aromatic compound metabolism. Involved in the biosynthesis of aromatic piperamides natural products such as piperine (1-piperoyl-piperidine), the pungent principle contributing, together with several terpenoids, to the aromatic properties of black pepper fruits, and displaying numerous pharmacological activities such as antiproliferative, antitumor, antiangiogenesis, antioxidant, antidiabetic, antiobesity, cardioprotective, antimicrobial, antiaging, and immunomodulatory effects. Mediates mainly the conversion of piperidine and piperoyl-CoA to piperine. Can also use pyrrolidine and isobutylamine as acceptors and 3,4-methylenedioxycinnamoyl-CoA as an alternative CoA-donor with a lower efficiency. The sequence is that of Piperine synthase from Piper nigrum (Black pepper).